The sequence spans 488 residues: Glutamyl-tRNA(Gln) amidotransferase subunit A (488 aa).

Catalysis depends on charge relay system residues K77 and S152. The active-site Acyl-ester intermediate is the S176.

This sequence belongs to the amidase family. GatA subfamily. As to quaternary structure, heterotrimer of A, B and C subunits.

The catalysed reaction is L-glutamyl-tRNA(Gln) + L-glutamine + ATP + H2O = L-glutaminyl-tRNA(Gln) + L-glutamate + ADP + phosphate + H(+). Allows the formation of correctly charged Gln-tRNA(Gln) through the transamidation of misacylated Glu-tRNA(Gln) in organisms which lack glutaminyl-tRNA synthetase. The reaction takes place in the presence of glutamine and ATP through an activated gamma-phospho-Glu-tRNA(Gln). This chain is Glutamyl-tRNA(Gln) amidotransferase subunit A, found in Streptococcus agalactiae serotype Ia (strain ATCC 27591 / A909 / CDC SS700).